The chain runs to 267 residues: Tetrahydromethanopterin S-methyltransferase subunit C (267 aa).

Transmembrane regions (helical) follow at residues 19–39 (IMAI…FMPA), 40–60 (QFSF…ADAV), 75–95 (IGMI…SVGG), 96–116 (IAGP…IGVL), 131–151 (AMVE…VVIA), 162–182 (YVVA…GILH), and 221–241 (GLMA…WAFM).

This sequence belongs to the MtrC family. In terms of assembly, the complex is composed of 8 subunits; MtrA, MtrB, MtrC, MtrD, MtrE, MtrF, MtrG and MtrH.

Its subcellular location is the cell membrane. It carries out the reaction 5-methyl-5,6,7,8-tetrahydromethanopterin + coenzyme M + 2 Na(+)(in) = 5,6,7,8-tetrahydromethanopterin + methyl-coenzyme M + 2 Na(+)(out). Its pathway is one-carbon metabolism; methanogenesis from CO(2); methyl-coenzyme M from 5,10-methylene-5,6,7,8-tetrahydromethanopterin: step 2/2. In terms of biological role, part of a complex that catalyzes the formation of methyl-coenzyme M and tetrahydromethanopterin from coenzyme M and methyl-tetrahydromethanopterin. This is an energy-conserving, sodium-ion translocating step. The sequence is that of Tetrahydromethanopterin S-methyltransferase subunit C from Methanosarcina acetivorans (strain ATCC 35395 / DSM 2834 / JCM 12185 / C2A).